The sequence spans 414 residues: Esterase FrsA (414 aa).

The protein belongs to the FrsA family.

The catalysed reaction is a carboxylic ester + H2O = an alcohol + a carboxylate + H(+). Functionally, catalyzes the hydrolysis of esters. The chain is Esterase FrsA from Enterobacter sp. (strain 638).